Reading from the N-terminus, the 291-residue chain is Flap endonuclease (291 aa).

Positions Tyr82 to Lys116 are helical arch. A DNA-binding site is contributed by Lys83. Positions 130, 153, 155, and 201 each coordinate Mg(2+). The segment at Asp188–Phe224 is DNA-binding; H3TH. The 5'-3' exonuclease domain maps to Glu190–Pro263. K(+)-binding residues include Val209 and Ile212.

It depends on Mg(2+) as a cofactor. The cofactor is K(+).

The catalysed reaction is Exonucleolytic cleavage in the 5'- to 3'-direction to yield nucleoside 5'-phosphates.. Its activity is regulated as follows. Inhibited by p-hydroxymercuribenzoate (PHMB). In terms of biological role, catalyzes both the 5'-exonucleolytic and structure-specific endonucleolytic hydrolysis of DNA branched nucleic acid molecules and probably plays a role in viral genome replication. Active on flap (branched duplex DNA containing a free single-stranded 5'-end), 5'overhangs and pseudo-Y structures. The substrates require a free, single-stranded 5' end, with endonucleolytic hydrolysis occurring at the junction of double- and single-stranded DNA. This function may be used for example to trim such branched molecules generated by Okazaki fragments synthesis during replication. The sequence is that of Flap endonuclease (D15) from Escherichia phage T5 (Enterobacteria phage T5).